A 102-amino-acid chain; its full sequence is Large ribosomal subunit protein bL21 (102 aa).

It belongs to the bacterial ribosomal protein bL21 family. In terms of assembly, part of the 50S ribosomal subunit. Contacts protein L20.

In terms of biological role, this protein binds to 23S rRNA in the presence of protein L20. This is Large ribosomal subunit protein bL21 from Ehrlichia chaffeensis (strain ATCC CRL-10679 / Arkansas).